We begin with the raw amino-acid sequence, 261 residues long: MANQESTTRTLLVALVVCLVSSVFVAGAAVALKPTQAENRLLDKQRSILAIAGLGEPGMSGKEVKALFDSRITAKVVDLQSGTFSDAQDPLGYDPLKAAKDPALSDALPAAEDIASIKRRERYTTVYLVETDGKLDTLILPVRGYGLWSTLYGFLALKGDLNTVAGFGFYQHGETPGLGGEVDNPKWKALWVGKTLYDAQGDLAVQIIKGSVDPQSAKATHQVDGLAGATLTSKGVDNLLHFWLGKDGFDAFLANLRKGEA.

The chain crosses the membrane as a helical span at residues 11–31 (LLVALVVCLVSSVFVAGAAVA). An FMN phosphoryl threonine modification is found at Thr-230.

The protein belongs to the NqrC family. As to quaternary structure, composed of six subunits; NqrA, NqrB, NqrC, NqrD, NqrE and NqrF. Requires FMN as cofactor.

It is found in the cell inner membrane. The enzyme catalyses a ubiquinone + n Na(+)(in) + NADH + H(+) = a ubiquinol + n Na(+)(out) + NAD(+). In terms of biological role, NQR complex catalyzes the reduction of ubiquinone-1 to ubiquinol by two successive reactions, coupled with the transport of Na(+) ions from the cytoplasm to the periplasm. NqrA to NqrE are probably involved in the second step, the conversion of ubisemiquinone to ubiquinol. The sequence is that of Na(+)-translocating NADH-quinone reductase subunit C from Pseudomonas aeruginosa (strain ATCC 15692 / DSM 22644 / CIP 104116 / JCM 14847 / LMG 12228 / 1C / PRS 101 / PAO1).